We begin with the raw amino-acid sequence, 242 residues long: Ribonuclease HII (242 aa).

The RNase H type-2 domain maps to 21 to 234 (KIIVGLDEAG…SKNLLKEIEE (214 aa)). A divalent metal cation-binding residues include Asp-27, Glu-28, and Asp-128.

The protein belongs to the RNase HII family. Requires Mn(2+) as cofactor. The cofactor is Mg(2+).

It is found in the cytoplasm. It carries out the reaction Endonucleolytic cleavage to 5'-phosphomonoester.. Functionally, endonuclease that specifically degrades the RNA of RNA-DNA hybrids. The polypeptide is Ribonuclease HII (Methanococcus maripaludis (strain DSM 14266 / JCM 13030 / NBRC 101832 / S2 / LL)).